The sequence spans 22 residues: Unknown protein 10 (22 aa).

The chain is Unknown protein 10 from Pseudotsuga menziesii (Douglas-fir).